A 397-amino-acid polypeptide reads, in one-letter code: MAKKKFERTKPHLNIGTIGHVDHGKTTLTAAITKWLAKKGLAEFRAFDSIDNAPEEKERGVTINISHVEYQTDKRHYAHVDCPGHADYIKNMISGAAHMDGTILVVAASDGPMPQTREHILLARQVQVPSIVVFLNKVDLVDDPELLDLVELELRELLNEYEFPGDDIPIIRGSALKALESENPDDPDVKQIYALMDAVDAYIPEPERDLDKPFLMPVGDVFTISGRGTVVTGRIDRGIIKTGDEVEIVGVRPTQKTVCTGVEMFRKTLDEGRAGDDVGLLLRGIKREDVERGQVVAKPGSITPHTKFMAQVYVLTKEEGGRHTPFFTGYRPQFYFRTTDVTGVAKLAEGVEMVMPGDNVEMEVTLITPIAMEEQLRFAIREGGRTVGAGVVSKVIE.

The 198-residue stretch at 10–207 (KPHLNIGTIG…AVDAYIPEPE (198 aa)) folds into the tr-type G domain. The segment at 19-26 (GHVDHGKT) is G1. 19-26 (GHVDHGKT) contacts GTP. Threonine 26 provides a ligand contact to Mg(2+). Residues 60–64 (GVTIN) are G2. Positions 81–84 (DCPG) are G3. Residues 81-85 (DCPGH) and 136-139 (NKVD) contribute to the GTP site. Positions 136–139 (NKVD) are G4. Positions 174 to 176 (SAL) are G5.

It belongs to the TRAFAC class translation factor GTPase superfamily. Classic translation factor GTPase family. EF-Tu/EF-1A subfamily. In terms of assembly, monomer.

The protein localises to the cytoplasm. The catalysed reaction is GTP + H2O = GDP + phosphate + H(+). In terms of biological role, GTP hydrolase that promotes the GTP-dependent binding of aminoacyl-tRNA to the A-site of ribosomes during protein biosynthesis. This Syntrophus aciditrophicus (strain SB) protein is Elongation factor Tu.